The chain runs to 115 residues: UPF0295 protein BLi00901/BL05075 (115 aa).

The next 2 helical transmembrane spans lie at Leu-18–Leu-38 and Val-41–Gly-61.

This sequence belongs to the UPF0295 family.

It is found in the cell membrane. This Bacillus licheniformis (strain ATCC 14580 / DSM 13 / JCM 2505 / CCUG 7422 / NBRC 12200 / NCIMB 9375 / NCTC 10341 / NRRL NRS-1264 / Gibson 46) protein is UPF0295 protein BLi00901/BL05075.